The primary structure comprises 162 residues: Interleukin-15 (162 aa).

An N-terminal signal peptide occupies residues 1-29 (MKILKPYMRNTSISCYLCFLLNSHFLTEA). Residues 30–48 (GIHVFILGCVSVGLPKTEA) constitute a propeptide that is removed on maturation. 2 disulfide bridges follow: cysteine 83/cysteine 133 and cysteine 90/cysteine 136. Residues asparagine 104, asparagine 108, and asparagine 119 are each glycosylated (N-linked (GlcNAc...) asparagine).

It belongs to the IL-15/IL-21 family.

Its subcellular location is the secreted. Functionally, cytokine that plays a major role in the development of inflammatory and protective immune responses to microbial invaders and parasites by modulating immune cells of both the innate and adaptive immune systems. Stimulates the proliferation and activation of natural killer cells, T-cells and B-cells and promotes the secretion of several cytokines. In monocytes, induces the production of IL8 and monocyte chemotactic protein 1/CCL2, two chemokines that attract neutrophils and monocytes respectively to sites of infection. Unlike most cytokines, which are secreted in soluble form, IL15 is expressed in association with its high affinity IL15RA on the surface of IL15-producing cells and delivers signals to target cells that express IL2RB and IL2RG receptor subunits. Binding to its receptor triggers the phosphorylation of JAK1 and JAK3 and the recruitment and subsequent phosphorylation of signal transducer and activator of transcription-3/STAT3 and STAT5. In mast cells, induces the rapid tyrosine phosphorylation of STAT6 and thereby controls mast cell survival and release of cytokines such as IL4. The polypeptide is Interleukin-15 (Il15) (Mus musculus (Mouse)).